The chain runs to 145 residues: 3-dehydroquinate dehydratase (145 aa).

Tyrosine 23 functions as the Proton acceptor in the catalytic mechanism. Positions 73, 79, and 86 each coordinate substrate. Histidine 99 functions as the Proton donor in the catalytic mechanism. Substrate-binding positions include 100–101 and arginine 110; that span reads LS.

Belongs to the type-II 3-dehydroquinase family. Homododecamer.

The enzyme catalyses 3-dehydroquinate = 3-dehydroshikimate + H2O. It functions in the pathway metabolic intermediate biosynthesis; chorismate biosynthesis; chorismate from D-erythrose 4-phosphate and phosphoenolpyruvate: step 3/7. Its function is as follows. Catalyzes a trans-dehydration via an enolate intermediate. This is 3-dehydroquinate dehydratase from Desulfitobacterium hafniense (strain DSM 10664 / DCB-2).